We begin with the raw amino-acid sequence, 156 residues long: Small ribosomal subunit protein uS7 (156 aa).

The protein belongs to the universal ribosomal protein uS7 family. In terms of assembly, part of the 30S ribosomal subunit. Contacts proteins S9 and S11.

In terms of biological role, one of the primary rRNA binding proteins, it binds directly to 16S rRNA where it nucleates assembly of the head domain of the 30S subunit. Is located at the subunit interface close to the decoding center, probably blocks exit of the E-site tRNA. The protein is Small ribosomal subunit protein uS7 of Clostridium botulinum (strain 657 / Type Ba4).